We begin with the raw amino-acid sequence, 310 residues long: UDP-N-acetylenolpyruvoylglucosamine reductase (310 aa).

The FAD-binding PCMH-type domain maps to 31-216 (KIGGPADYFV…LRKIEELNQA (186 aa)). Residue arginine 180 is part of the active site. Catalysis depends on serine 230, which acts as the Proton donor. Glutamate 300 is an active-site residue.

The protein belongs to the MurB family. FAD is required as a cofactor.

The protein localises to the cytoplasm. The catalysed reaction is UDP-N-acetyl-alpha-D-muramate + NADP(+) = UDP-N-acetyl-3-O-(1-carboxyvinyl)-alpha-D-glucosamine + NADPH + H(+). The protein operates within cell wall biogenesis; peptidoglycan biosynthesis. In terms of biological role, cell wall formation. In Lachnoclostridium phytofermentans (strain ATCC 700394 / DSM 18823 / ISDg) (Clostridium phytofermentans), this protein is UDP-N-acetylenolpyruvoylglucosamine reductase.